The following is a 193-amino-acid chain: uncharacterized protein (193 aa).

The helical transmembrane segment at 153–170 (WRYWAVIALIAAVLIYLY) threads the bilayer.

The protein localises to the membrane. This is an uncharacterized protein from Invertebrate iridescent virus 6 (IIV-6).